Consider the following 143-residue polypeptide: Transcriptional regulator MraZ (143 aa).

2 consecutive SpoVT-AbrB domains span residues 5 to 47 and 76 to 119; these read THSP…TTRE and ANAE…DAGT.

This sequence belongs to the MraZ family. In terms of assembly, forms oligomers.

The protein localises to the cytoplasm. It is found in the nucleoid. The protein is Transcriptional regulator MraZ of Clavibacter michiganensis subsp. michiganensis (strain NCPPB 382).